Reading from the N-terminus, the 241-residue chain is NLP effector protein 7 (241 aa).

An N-terminal signal peptide occupies residues 1-19 (MHLCALLIAAAGVLASVRA). A Conserved undecapeptide motif motif is present at residues 105–115 (AIMYAWYFPKA). The Conserved heptapeptide motif signature appears at 125-131 (GSRHYWL). A glycan (N-linked (GlcNAc...) asparagine) is linked at Asn-144.

The protein belongs to the Necrosis inducing protein (NPP1) family.

The protein localises to the secreted. Secreted effector that acts as a pathogen-associated molecular pattern (PAMP) recognized by the plant immune system. Induces necrosis in Nicotiana benthamiana leaves and can induce Phytophthora capsici resistance in Nicotiana benthamiana. Also significantly improves disease resistance of Arabidopsis thaliana to Hyaloperonospora arabidopsidis. causes an inhibition of plant growth which is typically associated with enhanced immunity when over-expressed in Arabidopsis. In Plasmopara viticola (Downy mildew of grapevine), this protein is NLP effector protein 7.